The primary structure comprises 139 residues: Putative pre-16S rRNA nuclease (139 aa).

The protein belongs to the YqgF nuclease family.

Its subcellular location is the cytoplasm. Could be a nuclease involved in processing of the 5'-end of pre-16S rRNA. This Phocaeicola vulgatus (strain ATCC 8482 / DSM 1447 / JCM 5826 / CCUG 4940 / NBRC 14291 / NCTC 11154) (Bacteroides vulgatus) protein is Putative pre-16S rRNA nuclease.